The following is a 177-amino-acid chain: MANPSKIEAVTELKTRLEKRPNFILASYSGLTVEDMSNLRAKLRKEGSEMKVIKNNLFLRALKESSEHKNNSIDFGDVYKGPLAAIFSLDALPAVAKVCKDFAKDKKELEIKTGYMDGEVLGKSGVEAIAGLPSKQELLAQVARGINAPATQIASGINQIMASLARAINAVAEKNGN.

Belongs to the universal ribosomal protein uL10 family. As to quaternary structure, part of the ribosomal stalk of the 50S ribosomal subunit. The N-terminus interacts with L11 and the large rRNA to form the base of the stalk. The C-terminus forms an elongated spine to which L12 dimers bind in a sequential fashion forming a multimeric L10(L12)X complex.

Forms part of the ribosomal stalk, playing a central role in the interaction of the ribosome with GTP-bound translation factors. This Leptospira biflexa serovar Patoc (strain Patoc 1 / Ames) protein is Large ribosomal subunit protein uL10.